The following is a 440-amino-acid chain: Phenylacetate-coenzyme A ligase (440 aa).

Belongs to the phenylacetyl-CoA ligase family. Monomer.

The catalysed reaction is 2-phenylacetate + ATP + CoA = phenylacetyl-CoA + AMP + diphosphate. It participates in aromatic compound metabolism; phenylacetate degradation. Inhibition of activity is observed in the presence of a 1 mM of the divalent cations zinc, copper, and nickel. Functionally, catalyzes the activation of phenylacetic acid (PA) to phenylacetyl-CoA (PA-CoA). Involved in the phenylalanine metabolism. The sequence is that of Phenylacetate-coenzyme A ligase (paaK) from Aromatoleum evansii (Azoarcus evansii).